We begin with the raw amino-acid sequence, 462 residues long: tRNA modification GTPase MnmE (462 aa).

Residues R27, E89, and R128 each contribute to the (6S)-5-formyl-5,6,7,8-tetrahydrofolate site. In terms of domain architecture, TrmE-type G spans 224–383; it reads GLATAIVGRP…LEAQIAKLFF (160 aa). N234 is a binding site for K(+). Residues 234–239, 253–259, and 278–281 each bind GTP; these read NVGKSS, TDVAGTT, and DTAG. S238 provides a ligand contact to Mg(2+). Residues T253, V255, and T258 each coordinate K(+). T259 lines the Mg(2+) pocket. Position 462 (K462) interacts with (6S)-5-formyl-5,6,7,8-tetrahydrofolate.

It belongs to the TRAFAC class TrmE-Era-EngA-EngB-Septin-like GTPase superfamily. TrmE GTPase family. In terms of assembly, homodimer. Heterotetramer of two MnmE and two MnmG subunits. K(+) is required as a cofactor.

It is found in the cytoplasm. Exhibits a very high intrinsic GTPase hydrolysis rate. Involved in the addition of a carboxymethylaminomethyl (cmnm) group at the wobble position (U34) of certain tRNAs, forming tRNA-cmnm(5)s(2)U34. This chain is tRNA modification GTPase MnmE, found in Latilactobacillus sakei subsp. sakei (strain 23K) (Lactobacillus sakei subsp. sakei).